The primary structure comprises 722 residues: Probable carboxypeptidase X1 (722 aa).

An N-terminal signal peptide occupies residues 1–20; that stretch reads MWGLLLAVTAFAPSVGLGLG. Positions 30–54 are disordered; it reads APGSTLAPHSSVAQPSTKANETSER. Positions 36–49 are enriched in polar residues; sequence APHSSVAQPSTKAN. N-linked (GlcNAc...) asparagine glycosylation is found at Asn-49, Asn-200, Asn-210, and Asn-307. An F5/8 type C domain is found at 103–263; it reads PGCPPLGLES…PCLRAEILAC (161 aa). A disulfide bridge connects residues Cys-105 and Cys-263. The Peptidase M14 domain occupies 287 to 610; that stretch reads RHHNYKAMRK…DALLTYLEQV (324 aa). The Zn(2+) site is built by His-349 and Glu-352. Asn-461 is a glycosylation site (N-linked (GlcNAc...) asparagine). His-487 is a binding site for Zn(2+). Residue Glu-580 is the Proton donor/acceptor of the active site.

The protein belongs to the peptidase M14 family. Requires Zn(2+) as cofactor. In terms of tissue distribution, strongly expressed in testis and spleen. Moderately expressed in salivary gland, brain, heart, lung, and kidney. Extremely low expression in liver and muscle. No expression in eye, adrenal, and white adipose tissues.

The protein localises to the secreted. May be involved in cell-cell interactions. No carboxypeptidase activity was found yet. The protein is Probable carboxypeptidase X1 (Cpxm1) of Mus musculus (Mouse).